Consider the following 528-residue polypeptide: Glutamate--cysteine ligase (528 aa).

It belongs to the glutamate--cysteine ligase type 1 family. Type 1 subfamily.

It catalyses the reaction L-cysteine + L-glutamate + ATP = gamma-L-glutamyl-L-cysteine + ADP + phosphate + H(+). The protein operates within sulfur metabolism; glutathione biosynthesis; glutathione from L-cysteine and L-glutamate: step 1/2. This chain is Glutamate--cysteine ligase, found in Janthinobacterium sp. (strain Marseille) (Minibacterium massiliensis).